A 299-amino-acid polypeptide reads, in one-letter code: Ribosomal RNA small subunit methyltransferase A (299 aa).

Residues asparagine 44, valine 46, glycine 71, glutamate 92, aspartate 122, and asparagine 141 each contribute to the S-adenosyl-L-methionine site.

Belongs to the class I-like SAM-binding methyltransferase superfamily. rRNA adenine N(6)-methyltransferase family. RsmA subfamily.

The protein localises to the cytoplasm. The enzyme catalyses adenosine(1518)/adenosine(1519) in 16S rRNA + 4 S-adenosyl-L-methionine = N(6)-dimethyladenosine(1518)/N(6)-dimethyladenosine(1519) in 16S rRNA + 4 S-adenosyl-L-homocysteine + 4 H(+). In terms of biological role, specifically dimethylates two adjacent adenosines (A1518 and A1519) in the loop of a conserved hairpin near the 3'-end of 16S rRNA in the 30S particle. May play a critical role in biogenesis of 30S subunits. The chain is Ribosomal RNA small subunit methyltransferase A from Rhodococcus erythropolis (strain PR4 / NBRC 100887).